The following is a 981-amino-acid chain: MSPLKIHGPIRIRSMQTGITKWKEGSFEVVEKENKVSLVVHYNTGGIPRIFQLSHNIKNVVLRPSGAKQSRLMLTLQDNSFLSIDKVPSKDAEEMRLFLDAVHQNRLNAAMKPSQGSGSFGAILGSRTSQKETNRQLSYSDNQVSSKRGSLETKDDTPFRKVLGNPSRGSIKAAAGNGVTPARTIPSLTSTSTPLRSGLLENRTEKRKRMLSSGSELNEDYPKENDSSSNNKAMTDPSRKYLTSSREKQLSLKQSEENRTSGLLPLQSSSFYGSRTAAKDYSPGSTNLDRTNISSQTPSAKRSLGFLPQPAPLSVKKLRCNQDYTGWNKPRVPLSSHQQQQLQGFSNLGNTCYMNAILQSLFSLQSFANDLLKQGIPWKKIPLNALIRRFAHLLVKKDICNSETKKDLLKKVKNAISATAERFSGYMQNDAHEFLSQCLDQLKEDMEKLNKTWKIEPVPGEENSPDISATRVYTCPVITNLEFEVQHSIICKVCGEIIPKREQFNDLSIDLPRRKKPLPPRSIQDSLDLFFRAEELEYSCEKCGGKCALVRHKFNRLPRILILHLKRYSFNVALSLNNKIGQQVIIPRYLTLSSHCTENTKPPFNLGWSAQMAVSRPLKASQMVNSCITSPSTPSKNFTFKSKTSLALSLDSDSEDELKRSVALSHRLCEMSGSEQQQEDLEKDSKSCRIEPDKSELENSGFDGMSEEELLAAVLEISKREASPSLSHEDDDKPTSSPDTGFAEDDIQEMPENPDSVETEKPKTITEPDPASFTEITKDCDENKENKTPEGSQGEVDWLQQYDMEREREEQELQQALAQSLQEQEAWEQKEDDDLKRATELSLQEFNNSFVDSLGSDEDSGNEDVLDMEYTEAEAEELKRNAETGNLPHSYRLISVVSHIGSTSSSGHYISDVYDIKKQAWFTYNDLEVSKIQEASVQSDRDRSGYIFFYMHKEIFDELLETEKNSQALNLEVGKTTRQVS.

A KEN box 1 motif is present at residues 32–34 (KEN). Short sequence motifs (D-box) lie at residues 71–79 (RLMLTLQDN) and 96–105 (RLFLDAVHQN). The tract at residues 111–306 (MKPSQGSGSF…TPSAKRSLGF (196 aa)) is disordered. Ser-114 carries the post-translational modification Phosphoserine. The span at 135–148 (RQLSYSDNQVSSKR) shows a compositional bias: polar residues. Residues 149-159 (GSLETKDDTPF) are compositionally biased toward basic and acidic residues. The D-box 3 signature appears at 160 to 168 (RKVLGNPSR). Ser-170 is modified (phosphoserine). Residues 183–200 (RTIPSLTSTSTPLRSGLL) are compositionally biased toward low complexity. Phosphoserine is present on Ser-212. A KEN box 2 motif is present at residues 223-225 (KEN). Basic and acidic residues predominate over residues 245 to 259 (SREKQLSLKQSEENR). The span at 283–300 (PGSTNLDRTNISSQTPSA) shows a compositional bias: polar residues. Positions 343–953 (QGFSNLGNTC…SGYIFFYMHK (611 aa)) constitute a USP domain. The active-site Nucleophile is Cys-352. At Ser-630 the chain carries Phosphoserine; by CDK2. Phosphoserine occurs at positions 652 and 654. 2 disordered regions span residues 670 to 705 (EMSG…FDGM) and 721 to 797 (EASP…GEVD). Composition is skewed to basic and acidic residues over residues 683–697 (KDSK…KSEL) and 721–734 (EASP…DDKP). The UIM 1 domain occupies 706–725 (SEEELLAAVLEISKREASPS). Ser-772 bears the Phosphoserine mark. A compositionally biased stretch (basic and acidic residues) spans 776 to 788 (ITKDCDENKENKT). A KEN box 3 motif is present at residues 784 to 786 (KEN). 2 consecutive UIM domains span residues 808-827 (REEQ…QEAW) and 830-849 (KEDD…FNNS). His-908 acts as the Proton acceptor in catalysis.

Belongs to the peptidase C19 family. Interacts with FZR1/CDH1. Interacts with CDT1. Polyubiquitinated via 'Lys-11'-linked ubiquitin by the APC(CDH1) complex during late mitosis, leading to its degradation. Able to mediate auto-deubiquitination. In terms of processing, phosphorylated at Ser-630 by CDK2 during G1/S phase but not during mitosis; phosphorylation at Ser-630 is required for deubiquitinase activity. Also polyubiquitinated during early G1 phase, without leading to degradation. Phosphorylated at Ser-114 by ATM following DNA damage, which in turn increases its deubiquitination activity towards BLM.

The protein resides in the nucleus. It is found in the chromosome. It carries out the reaction Thiol-dependent hydrolysis of ester, thioester, amide, peptide and isopeptide bonds formed by the C-terminal Gly of ubiquitin (a 76-residue protein attached to proteins as an intracellular targeting signal).. Functionally, deubiquitinase that plays a role in different processes including cell cycle regulation, DNA replication or DNA damage response. Antagonizes the anaphase-promoting complex (APC/C) during G1/S transition by mediating deubiquitination of cyclin-A (CCNA1 and CCNA2), thereby promoting S phase entry. Specifically mediates deubiquitination of 'Lys-11'-linked polyubiquitin chains, a specific ubiquitin-linkage type mediated by the APC/C complex. Phosphorylation at Ser-628 during G1/S phase maximizes the deubiquitinase activity, leading to prevent degradation of cyclin-A (CCNA1 and CCNA2). Plays an important role in the regulation of DNA replication by stabilizing the licensing factor CDT1. Also plays an essential role beyond S-phase entry to promote the efficiency and fidelity of replication by deubiquitinating checkpoint kinase 1/CHK1, promoting its stability. Sustains the DNA damage response (DDR) by deubiquitinating and stabilizing the ATP-dependent DNA helicase BLM. Mechanistically, DNA double-strand breaks (DSB) promotes ATM-mediated phosphorylation of USP37 and enhances the binding between USP37 and BLM. Promotes cell migration by deubiquitinating and stabilizing the epithelial-mesenchymal transition (EMT)-inducing transcription factor SNAI. Plays a role in the regulation of mitotic spindle assembly and mitotic progression by associating with chromatin-associated WAPL and stabilizing it through deubiquitination. This chain is Ubiquitin carboxyl-terminal hydrolase 37 (USP37), found in Bos taurus (Bovine).